The following is a 175-amino-acid chain: Electron transport protein HydN (175 aa).

4Fe-4S ferredoxin-type domains follow at residues 2–32 (NRFI…NQDC), 48–79 (KGVN…SRDK), 80–109 (GFVH…VVVR), and 124–157 (DKAE…CVDR). Residues C12, C15, C18, C22, C58, C61, C66, C70, C89, C92, C95, C99, C131, C134, C143, and C147 each coordinate [4Fe-4S] cluster.

[4Fe-4S] cluster serves as cofactor.

Its function is as follows. Electron transport from formate to hydrogen. This is Electron transport protein HydN (hydN) from Escherichia coli O157:H7.